The chain runs to 532 residues: D-arabinono-1,4-lactone oxidase (532 aa).

Positions 25–199 constitute an FAD-binding PCMH-type domain; sequence YSARPRLYFQ…VRATIRVVPA (175 aa). His62 carries the post-translational modification Pros-8alpha-FAD histidine.

The protein belongs to the oxygen-dependent FAD-linked oxidoreductase family. It depends on FAD as a cofactor.

Its subcellular location is the mitochondrion membrane. It catalyses the reaction D-arabinono-1,4-lactone + O2 = dehydro-D-arabinono-1,4-lactone + H2O2 + H(+). The protein operates within cofactor biosynthesis; D-erythroascorbate biosynthesis; dehydro-D-arabinono-1,4-lactone from D-arabinose: step 2/2. The sequence is that of D-arabinono-1,4-lactone oxidase (ALO1) from Eremothecium gossypii (strain ATCC 10895 / CBS 109.51 / FGSC 9923 / NRRL Y-1056) (Yeast).